An 84-amino-acid chain; its full sequence is Cryptic plasmid protein A (84 aa).

The sequence is that of Cryptic plasmid protein A (cppA) from Neisseria gonorrhoeae.